We begin with the raw amino-acid sequence, 272 residues long: 3-methyl-2-oxobutanoate hydroxymethyltransferase (272 aa).

Residues D43 and D82 each contribute to the Mg(2+) site. Residues 43–44, D82, and K112 contribute to the 3-methyl-2-oxobutanoate site; that span reads DS. E114 is a binding site for Mg(2+). E179 serves as the catalytic Proton acceptor.

It belongs to the PanB family. In terms of assembly, homodecamer; pentamer of dimers. Mg(2+) is required as a cofactor.

It is found in the cytoplasm. It carries out the reaction 3-methyl-2-oxobutanoate + (6R)-5,10-methylene-5,6,7,8-tetrahydrofolate + H2O = 2-dehydropantoate + (6S)-5,6,7,8-tetrahydrofolate. The protein operates within cofactor biosynthesis; (R)-pantothenate biosynthesis; (R)-pantoate from 3-methyl-2-oxobutanoate: step 1/2. In terms of biological role, catalyzes the reversible reaction in which hydroxymethyl group from 5,10-methylenetetrahydrofolate is transferred onto alpha-ketoisovalerate to form ketopantoate. The sequence is that of 3-methyl-2-oxobutanoate hydroxymethyltransferase from Staphylococcus aureus (strain bovine RF122 / ET3-1).